The following is a 233-amino-acid chain: Small ribosomal subunit protein uS7m (233 aa).

The N-terminal 28 residues, 1-28 (MAAPTGKLLVHRIRAGLTCLTQVRWSRY), are a transit peptide targeting the mitochondrion.

Belongs to the universal ribosomal protein uS7 family. In terms of assembly, component of the mitochondrial ribosome small subunit (28S) which comprises a 12S rRNA and about 30 distinct proteins.

It localises to the mitochondrion. The chain is Small ribosomal subunit protein uS7m (mrps7) from Xenopus laevis (African clawed frog).